The following is a 251-amino-acid chain: 3-deoxy-manno-octulosonate cytidylyltransferase (251 aa).

It belongs to the KdsB family.

It localises to the cytoplasm. It catalyses the reaction 3-deoxy-alpha-D-manno-oct-2-ulosonate + CTP = CMP-3-deoxy-beta-D-manno-octulosonate + diphosphate. It functions in the pathway nucleotide-sugar biosynthesis; CMP-3-deoxy-D-manno-octulosonate biosynthesis; CMP-3-deoxy-D-manno-octulosonate from 3-deoxy-D-manno-octulosonate and CTP: step 1/1. It participates in bacterial outer membrane biogenesis; lipopolysaccharide biosynthesis. Its function is as follows. Activates KDO (a required 8-carbon sugar) for incorporation into bacterial lipopolysaccharide in Gram-negative bacteria. The chain is 3-deoxy-manno-octulosonate cytidylyltransferase from Rhizobium etli (strain CIAT 652).